A 304-amino-acid chain; its full sequence is GTPase Era (304 aa).

An Era-type G domain is found at 11–186 (YCGFIAIVGR…LRKGVHHFPE (176 aa)). A G1 region spans residues 19 to 26 (GRPNVGKS). Residue 19–26 (GRPNVGKS) participates in GTP binding. A G2 region spans residues 45 to 49 (QTTRH). The tract at residues 66 to 69 (DTPG) is G3. GTP contacts are provided by residues 66–70 (DTPGL) and 128–131 (NKVD). The interval 128 to 131 (NKVD) is G4. The G5 stretch occupies residues 158-160 (ISA). Positions 210-287 (TGEELPYSVT…HLELWVKVKS (78 aa)) constitute a KH type-2 domain.

Belongs to the TRAFAC class TrmE-Era-EngA-EngB-Septin-like GTPase superfamily. Era GTPase family. As to quaternary structure, monomer.

Its subcellular location is the cytoplasm. The protein localises to the cell inner membrane. Functionally, an essential GTPase that binds both GDP and GTP, with rapid nucleotide exchange. Plays a role in 16S rRNA processing and 30S ribosomal subunit biogenesis and possibly also in cell cycle regulation and energy metabolism. This Histophilus somni (strain 2336) (Haemophilus somnus) protein is GTPase Era.